The sequence spans 436 residues: Chromosomal replication initiator protein DnaA (436 aa).

The interval 1 to 69 (MLADEILELL…AYLYEVKTGK (69 aa)) is domain I, interacts with DnaA modulators. A domain II region spans residues 69–99 (KKPEVEITSQTKLKNIKQNQVNVKQIKAQSS). The interval 100-314 (ILNPGYTFEN…GAIINLNAYA (215 aa)) is domain III, AAA+ region. 4 residues coordinate ATP: G144, G146, K147, and T148. Residues 315 to 436 (SLMRVEITLE…EIKNKILTKG (122 aa)) are domain IV, binds dsDNA.

This sequence belongs to the DnaA family. Oligomerizes as a right-handed, spiral filament on DNA at oriC.

It localises to the cytoplasm. Plays an essential role in the initiation and regulation of chromosomal replication. ATP-DnaA binds to the origin of replication (oriC) to initiate formation of the DNA replication initiation complex once per cell cycle. Binds the DnaA box (a 9 base pair repeat at the origin) and separates the double-stranded (ds)DNA. Forms a right-handed helical filament on oriC DNA; dsDNA binds to the exterior of the filament while single-stranded (ss)DNA is stabiized in the filament's interior. The ATP-DnaA-oriC complex binds and stabilizes one strand of the AT-rich DNA unwinding element (DUE), permitting loading of DNA polymerase. After initiation quickly degrades to an ADP-DnaA complex that is not apt for DNA replication. Binds acidic phospholipids. The sequence is that of Chromosomal replication initiator protein DnaA from Campylobacter concisus (strain 13826).